The following is a 130-amino-acid chain: Small ribosomal subunit protein eS8 (130 aa).

It belongs to the eukaryotic ribosomal protein eS8 family. As to quaternary structure, part of the 30S ribosomal subunit.

The polypeptide is Small ribosomal subunit protein eS8 (Thermococcus onnurineus (strain NA1)).